A 453-amino-acid polypeptide reads, in one-letter code: uncharacterized protein (453 aa).

Positions 5 to 63 (LLKKNQSIELTIEDLTHDGSGVGKIDGYPFFIPNTLPGEKVTAKIIKLNKNYGFARMEN) constitute a TRAM domain. [4Fe-4S] cluster is bound by residues C76, C82, C85, and C162. Residues Q285, Y314, E335, and D383 each coordinate S-adenosyl-L-methionine. C410 serves as the catalytic Nucleophile.

It belongs to the class I-like SAM-binding methyltransferase superfamily. RNA M5U methyltransferase family.

This is an uncharacterized protein from Listeria monocytogenes serovar 1/2a (strain ATCC BAA-679 / EGD-e).